The sequence spans 141 residues: Hemoglobin subunit alpha-D/D' (141 aa).

The region spanning methionine 1 to arginine 141 is the Globin domain. Heme b-binding residues include histidine 58 and histidine 87.

It belongs to the globin family. Heterotetramer of two alpha-D chains and two beta chains. In terms of tissue distribution, red blood cells.

In terms of biological role, involved in oxygen transport from the lung to the various peripheral tissues. This Gyps rueppelli (Rueppell's griffon) protein is Hemoglobin subunit alpha-D/D' (HBAD).